The following is a 508-amino-acid chain: Photosystem II CP47 reaction center protein (508 aa).

A run of 6 helical transmembrane segments spans residues Ser21–Ser36, Ile101–Trp115, Gly140–Phe156, Ile203–Ser218, Val237–Val252, and Ser457–Arg472.

This sequence belongs to the PsbB/PsbC family. PsbB subfamily. PSII is composed of 1 copy each of membrane proteins PsbA, PsbB, PsbC, PsbD, PsbE, PsbF, PsbH, PsbI, PsbJ, PsbK, PsbL, PsbM, PsbT, PsbX, PsbY, PsbZ, Psb30/Ycf12, at least 3 peripheral proteins of the oxygen-evolving complex and a large number of cofactors. It forms dimeric complexes. Requires Binds multiple chlorophylls. PSII binds additional chlorophylls, carotenoids and specific lipids. as cofactor.

The protein localises to the plastid. Its subcellular location is the chloroplast thylakoid membrane. One of the components of the core complex of photosystem II (PSII). It binds chlorophyll and helps catalyze the primary light-induced photochemical processes of PSII. PSII is a light-driven water:plastoquinone oxidoreductase, using light energy to abstract electrons from H(2)O, generating O(2) and a proton gradient subsequently used for ATP formation. The protein is Photosystem II CP47 reaction center protein of Nymphaea alba (White water-lily).